Here is a 640-residue protein sequence, read N- to C-terminus: Threonine--tRNA ligase (640 aa).

Residues 1 to 61 form the TGS domain; that stretch reads MPVITLPDGS…SNDATLQIIT (61 aa). Residues 242–533 are catalytic; that stretch reads DHRKIGKQLD…LIEHYAGVFP (292 aa). 3 residues coordinate Zn(2+): Cys-333, His-384, and His-510.

It belongs to the class-II aminoacyl-tRNA synthetase family. In terms of assembly, homodimer. Requires Zn(2+) as cofactor.

It is found in the cytoplasm. The enzyme catalyses tRNA(Thr) + L-threonine + ATP = L-threonyl-tRNA(Thr) + AMP + diphosphate + H(+). Its function is as follows. Catalyzes the attachment of threonine to tRNA(Thr) in a two-step reaction: L-threonine is first activated by ATP to form Thr-AMP and then transferred to the acceptor end of tRNA(Thr). Also edits incorrectly charged L-seryl-tRNA(Thr). The chain is Threonine--tRNA ligase from Pseudomonas putida (strain ATCC 700007 / DSM 6899 / JCM 31910 / BCRC 17059 / LMG 24140 / F1).